The sequence spans 224 residues: 7-cyano-7-deazaguanine synthase (224 aa).

Position 10–20 (10–20 (LSGGLDSATVV)) interacts with ATP. The Zn(2+) site is built by cysteine 189, cysteine 199, cysteine 202, and cysteine 205.

The protein belongs to the QueC family. Zn(2+) serves as cofactor.

It catalyses the reaction 7-carboxy-7-deazaguanine + NH4(+) + ATP = 7-cyano-7-deazaguanine + ADP + phosphate + H2O + H(+). Its pathway is purine metabolism; 7-cyano-7-deazaguanine biosynthesis. Its function is as follows. Catalyzes the ATP-dependent conversion of 7-carboxy-7-deazaguanine (CDG) to 7-cyano-7-deazaguanine (preQ(0)). This chain is 7-cyano-7-deazaguanine synthase, found in Pseudomonas paraeruginosa (strain DSM 24068 / PA7) (Pseudomonas aeruginosa (strain PA7)).